Reading from the N-terminus, the 198-residue chain is Recombination protein RecR (198 aa).

A C4-type zinc finger spans residues 58-73; that stretch reads CSVCGNFTDTDPCAIC. A Toprim domain is found at 81-175; it reads DIICVVEQPK…KVTRIAAGIP (95 aa).

The protein belongs to the RecR family.

In terms of biological role, may play a role in DNA repair. It seems to be involved in an RecBC-independent recombinational process of DNA repair. It may act with RecF and RecO. This chain is Recombination protein RecR, found in Clostridium perfringens (strain ATCC 13124 / DSM 756 / JCM 1290 / NCIMB 6125 / NCTC 8237 / Type A).